A 349-amino-acid chain; its full sequence is NADH-quinone oxidoreductase subunit H (349 aa).

A run of 8 helical transmembrane segments spans residues 14–34 (LLVW…GCVA), 85–105 (GLFL…WAVI), 120–140 (LLYI…AGWA), 164–184 (MGFA…VDIV), 196–216 (ILSW…ISGV), 243–263 (GMAF…VAAL), 285–305 (AGGF…FLWF), and 324–344 (VFIP…FSPL).

The protein belongs to the complex I subunit 1 family. As to quaternary structure, NDH-1 is composed of 14 different subunits. Subunits NuoA, H, J, K, L, M, N constitute the membrane sector of the complex.

Its subcellular location is the cell inner membrane. It catalyses the reaction a quinone + NADH + 5 H(+)(in) = a quinol + NAD(+) + 4 H(+)(out). NDH-1 shuttles electrons from NADH, via FMN and iron-sulfur (Fe-S) centers, to quinones in the respiratory chain. The immediate electron acceptor for the enzyme in this species is believed to be ubiquinone. Couples the redox reaction to proton translocation (for every two electrons transferred, four hydrogen ions are translocated across the cytoplasmic membrane), and thus conserves the redox energy in a proton gradient. This subunit may bind ubiquinone. This Chromobacterium violaceum (strain ATCC 12472 / DSM 30191 / JCM 1249 / CCUG 213 / NBRC 12614 / NCIMB 9131 / NCTC 9757 / MK) protein is NADH-quinone oxidoreductase subunit H.